Here is a 76-residue protein sequence, read N- to C-terminus: Exodeoxyribonuclease 7 small subunit (76 aa).

This sequence belongs to the XseB family. Heterooligomer composed of large and small subunits.

Its subcellular location is the cytoplasm. The enzyme catalyses Exonucleolytic cleavage in either 5'- to 3'- or 3'- to 5'-direction to yield nucleoside 5'-phosphates.. Functionally, bidirectionally degrades single-stranded DNA into large acid-insoluble oligonucleotides, which are then degraded further into small acid-soluble oligonucleotides. This chain is Exodeoxyribonuclease 7 small subunit, found in Bacillus mycoides (strain KBAB4) (Bacillus weihenstephanensis).